Here is a 215-residue protein sequence, read N- to C-terminus: Cytochrome b6 (215 aa).

The helical transmembrane segment at isoleucine 32 to phenylalanine 52 threads the bilayer. Residue cysteine 35 coordinates heme c. The heme b site is built by histidine 86 and histidine 100. A run of 3 helical transmembrane segments spans residues alanine 90–phenylalanine 110, leucine 116–tyrosine 136, and leucine 186–isoleucine 206. Heme b is bound by residues histidine 187 and histidine 202.

This sequence belongs to the cytochrome b family. PetB subfamily. In terms of assembly, the 4 large subunits of the cytochrome b6-f complex are cytochrome b6, subunit IV (17 kDa polypeptide, PetD), cytochrome f and the Rieske protein, while the 4 small subunits are PetG, PetL, PetM and PetN. The complex functions as a dimer. Requires heme b as cofactor. The cofactor is heme c.

Its subcellular location is the plastid. The protein localises to the chloroplast thylakoid membrane. In terms of biological role, component of the cytochrome b6-f complex, which mediates electron transfer between photosystem II (PSII) and photosystem I (PSI), cyclic electron flow around PSI, and state transitions. The protein is Cytochrome b6 of Pinus thunbergii (Japanese black pine).